Consider the following 1082-residue polypeptide: MSWDDAIDGVDRDTPGGRMPRGWTVAARLRAANDDITHAAVADTLPAYAELHCLSDFSFLRGASSAEQLFARAHHCGYSALAITDECSLAGIVRGLEASRATGVQLIVGSEFTLVDGTRFVLLVENAHGYPQLCSVITTGRRAAGKGAYRLGRAEVEAHFRDVVPGVFALWLPGDQPQAEQGAWLQRVFAERAFLAVELHREQDDAARLQALQALAQQLGMSALASGDVQMAQRRDRIVQDTLTAIRHTLPLADCGAHLFRNGERHLRPRRALGNIYPHALLQASVELAQRCTFDLSKVQYTYPRELVPQGHTPASYLRQLTEAGMRERWPEGAPAQVVAQIDSELELIAYKGYEAFFLTVQDVVRFARAQGILCQGRGSSANSAVCYALGITAVNPSETRLLMARFLSKERDEPPDIDVDFEHERREEVLQYVYTKYGRERAALAATVICYRGKSAVRDVAKAFGLPPDQIALLANCYGWGNGDTPMEQRIAEAGFDLANPLINKILAVTEHLRDHPRHLSQHVGGFVISDEPLSMLVPVENAAMADRTIIQWDKDDLETMKLLKVDCLALGMLTCIRKTLDLVRGHRGRDYTIATLPGEDAATYKMIQRADTVGVFQIESRAQMAMLPRLKPREFYDLVIEVAIVRPGPIQGDMVHPYLRRRQGYEPVSFPSPGVEEILGRTLGIPLFQEQVMELVIHAGYTDSEADQLRRSMAAWRRGGDMEPHRVRIRELMAGRGYAPEFIDQIFEQIKGFGSYGFPQSHAASFAKLVYASCWLKRHEPAAFACGLLNAQPMGFYSASQIVQDARRGSPERQRVEVLPVDVLHSDWDNILVGGRPWHSDADPGEQPAIRLGLRQVSGLSEKVVERIVAARAQRPFADIGDLCLRAALDEKARLALAEAGALQSMVGNRNAARWAMAGVEARRPLLPGSPAERAVELPAPRAGEEILADYRAVGLSLRQHPMALLRPQMLQRRILGLRELQARRHGSGVHVAGLVTQRQRPATAKGTIFVTLEDEHGMINVIVWSHLAMRRRRALLESRLLAVRGRWERVDGVEHLIAGDLYDLSDLLGEMQLPSRDFH.

It belongs to the DNA polymerase type-C family. DnaE2 subfamily.

Its subcellular location is the cytoplasm. The enzyme catalyses DNA(n) + a 2'-deoxyribonucleoside 5'-triphosphate = DNA(n+1) + diphosphate. Its function is as follows. DNA polymerase involved in damage-induced mutagenesis and translesion synthesis (TLS). It is not the major replicative DNA polymerase. In Xanthomonas campestris pv. campestris (strain 8004), this protein is Error-prone DNA polymerase.